We begin with the raw amino-acid sequence, 312 residues long: Malate dehydrogenase 1 (312 aa).

NAD(+)-binding positions include 11–16 (GAGQIG) and aspartate 35. 2 residues coordinate substrate: arginine 86 and arginine 92. NAD(+)-binding positions include asparagine 99 and 122 to 124 (ITN). Substrate contacts are provided by asparagine 124 and arginine 155. Histidine 179 serves as the catalytic Proton acceptor.

Belongs to the LDH/MDH superfamily. MDH type 3 family.

The enzyme catalyses (S)-malate + NAD(+) = oxaloacetate + NADH + H(+). Functionally, catalyzes the reversible oxidation of malate to oxaloacetate. In Anaeromyxobacter dehalogenans (strain 2CP-C), this protein is Malate dehydrogenase 1.